A 400-amino-acid chain; its full sequence is Argininosuccinate synthase (400 aa).

ATP is bound by residues 10–18 (AYSGGVDTS) and A38. Y89 serves as a coordination point for L-citrulline. G119 serves as a coordination point for ATP. T121, N125, and D126 together coordinate L-aspartate. Residue N125 coordinates L-citrulline. 5 residues coordinate L-citrulline: R129, S177, S186, E262, and Y274.

This sequence belongs to the argininosuccinate synthase family. Type 1 subfamily. As to quaternary structure, homotetramer.

The protein localises to the cytoplasm. It carries out the reaction L-citrulline + L-aspartate + ATP = 2-(N(omega)-L-arginino)succinate + AMP + diphosphate + H(+). Its pathway is amino-acid biosynthesis; L-arginine biosynthesis; L-arginine from L-ornithine and carbamoyl phosphate: step 2/3. This chain is Argininosuccinate synthase, found in Trichormus variabilis (strain ATCC 29413 / PCC 7937) (Anabaena variabilis).